The following is a 347-amino-acid chain: MSKKIKAGIVGATGYTGVELLRLLAAHPDVEVAAVTSRSEAGTAVADYFPSLRGVYGLAFQTPDEAGLEQCDIVFFATPNGIAMKDAPRLIEQGVRVIDLSADFRIRDIPTWEHWYGMTHAAPGLVSQAVYGLSELNREAVAQARLVANPGCYPTCVSLPLVPLLRQCRLKPGMPLIADCKSGVSGAGRKGNVGSLLCEAGDNFKAYGTAGHRHLPEIRQTIAGLQDGIAEGFVFTPHLAPMIRGMHATVYLHLSDGSDPETVLRDYYRDSPFMDILPAGSTPETRSVRGANLCRISIRQAAQSDVWVVLSVIDNLVKGAAGQAVQNMNIMFGLEETHGLGGIPLLP.

C152 is an active-site residue.

The protein belongs to the NAGSA dehydrogenase family. Type 1 subfamily.

The protein resides in the cytoplasm. The enzyme catalyses N-acetyl-L-glutamate 5-semialdehyde + phosphate + NADP(+) = N-acetyl-L-glutamyl 5-phosphate + NADPH + H(+). It functions in the pathway amino-acid biosynthesis; L-arginine biosynthesis; N(2)-acetyl-L-ornithine from L-glutamate: step 3/4. In terms of biological role, catalyzes the NADPH-dependent reduction of N-acetyl-5-glutamyl phosphate to yield N-acetyl-L-glutamate 5-semialdehyde. The protein is N-acetyl-gamma-glutamyl-phosphate reductase of Neisseria gonorrhoeae (strain NCCP11945).